The primary structure comprises 103 residues: Large ribosomal subunit protein uL24 (103 aa).

It belongs to the universal ribosomal protein uL24 family. As to quaternary structure, part of the 50S ribosomal subunit.

Functionally, one of two assembly initiator proteins, it binds directly to the 5'-end of the 23S rRNA, where it nucleates assembly of the 50S subunit. Its function is as follows. One of the proteins that surrounds the polypeptide exit tunnel on the outside of the subunit. The polypeptide is Large ribosomal subunit protein uL24 (Enterococcus faecalis (strain ATCC 700802 / V583)).